We begin with the raw amino-acid sequence, 40 residues long: Photosystem II reaction center protein J (40 aa).

The helical transmembrane segment at 8 to 28 threads the bilayer; that stretch reads IPLWLIGTVTGILVIGLIGFF.

This sequence belongs to the PsbJ family. PSII is composed of 1 copy each of membrane proteins PsbA, PsbB, PsbC, PsbD, PsbE, PsbF, PsbH, PsbI, PsbJ, PsbK, PsbL, PsbM, PsbT, PsbX, PsbY, PsbZ, Psb30/Ycf12, at least 3 peripheral proteins of the oxygen-evolving complex and a large number of cofactors. It forms dimeric complexes.

The protein localises to the plastid. Its subcellular location is the chloroplast thylakoid membrane. One of the components of the core complex of photosystem II (PSII). PSII is a light-driven water:plastoquinone oxidoreductase that uses light energy to abstract electrons from H(2)O, generating O(2) and a proton gradient subsequently used for ATP formation. It consists of a core antenna complex that captures photons, and an electron transfer chain that converts photonic excitation into a charge separation. This Zea mays (Maize) protein is Photosystem II reaction center protein J.